A 149-amino-acid chain; its full sequence is MIALLQRVSEAAVRVDGETVGAIGPGILALIGVQRGDTEAQAARLLERILGYRLFEDEAGRMNLSLSDTGGGLLLVPQFTLAADTRKGMRASFTPAAEPGLGRALFDHLVSLACSVHTPVATGCFGAHMAVSLVNDGPVTFWLEVPPPR.

The Gly-cisPro motif, important for rejection of L-amino acids signature appears at 137-138; it reads GP.

The protein belongs to the DTD family. Homodimer.

The protein resides in the cytoplasm. The catalysed reaction is glycyl-tRNA(Ala) + H2O = tRNA(Ala) + glycine + H(+). It carries out the reaction a D-aminoacyl-tRNA + H2O = a tRNA + a D-alpha-amino acid + H(+). Functionally, an aminoacyl-tRNA editing enzyme that deacylates mischarged D-aminoacyl-tRNAs. Also deacylates mischarged glycyl-tRNA(Ala), protecting cells against glycine mischarging by AlaRS. Acts via tRNA-based rather than protein-based catalysis; rejects L-amino acids rather than detecting D-amino acids in the active site. By recycling D-aminoacyl-tRNA to D-amino acids and free tRNA molecules, this enzyme counteracts the toxicity associated with the formation of D-aminoacyl-tRNA entities in vivo and helps enforce protein L-homochirality. This is D-aminoacyl-tRNA deacylase from Thioalkalivibrio sulfidiphilus (strain HL-EbGR7).